The sequence spans 461 residues: Cyclin-A2-4 (461 aa).

This sequence belongs to the cyclin family. Cyclin AB subfamily.

This is Cyclin-A2-4 (CYCA2-4) from Arabidopsis thaliana (Mouse-ear cress).